Here is a 444-residue protein sequence, read N- to C-terminus: Ribosomal protein uS12 methylthiotransferase RimO (444 aa).

The region spanning 4–118 (IKYGVVSLGC…LSDAIKKSIE (115 aa)) is the MTTase N-terminal domain. [4Fe-4S] cluster contacts are provided by C13, C48, C81, C155, C159, and C162. The Radical SAM core domain occupies 141–373 (TTQKHYAYLR…MQRDIVKSIN (233 aa)). The 67-residue stretch at 374–440 (ADKVNKVYKV…EYDLIGVVCD (67 aa)) folds into the TRAM domain.

It belongs to the methylthiotransferase family. RimO subfamily. [4Fe-4S] cluster is required as a cofactor.

The protein resides in the cytoplasm. It catalyses the reaction L-aspartate(89)-[ribosomal protein uS12]-hydrogen + (sulfur carrier)-SH + AH2 + 2 S-adenosyl-L-methionine = 3-methylsulfanyl-L-aspartate(89)-[ribosomal protein uS12]-hydrogen + (sulfur carrier)-H + 5'-deoxyadenosine + L-methionine + A + S-adenosyl-L-homocysteine + 2 H(+). In terms of biological role, catalyzes the methylthiolation of an aspartic acid residue of ribosomal protein uS12. This is Ribosomal protein uS12 methylthiotransferase RimO from Clostridium tetani (strain Massachusetts / E88).